Reading from the N-terminus, the 362-residue chain is Exopolygalacturonase (362 aa).

PbH1 repeat units follow at residues 138 to 164 (CKNL…HIGR), 165 to 186 (SDGV…SLGD), 188 to 208 (SKNI…SVGS), and 218 to 239 (VVGI…RIKT). An N-linked (GlcNAc...) asparagine glycan is attached at Asn140. Catalysis depends on Asp179, which acts as the Proton donor. N-linked (GlcNAc...) asparagine glycosylation is found at Asn192 and Asn195. His202 is an active-site residue. Asn225 carries an N-linked (GlcNAc...) asparagine glycan.

This sequence belongs to the glycosyl hydrolase 28 family. As to expression, pollen tubes growing through the style during pollination.

Its subcellular location is the secreted. The protein localises to the cell wall. It carries out the reaction [(1-&gt;4)-alpha-D-galacturonosyl](n) + H2O = alpha-D-galacturonate + [(1-&gt;4)-alpha-D-galacturonosyl](n-1). In terms of biological role, may function in depolymerizing pectin during pollen development, germination, and tube growth. Acts as an exo-polygalacturonase. The chain is Exopolygalacturonase from Oenothera organensis (Evening primrose).